The sequence spans 1605 residues: Kinesin-like protein klp-12 (1605 aa).

The Kinesin motor domain occupies 5–358; it reads CVQVALRIRP…MKYANRAKEI (354 aa). An ATP-binding site is contributed by 84-91; that stretch reads GQTGSGKT. The Mg(2+) site is built by T91 and S217. Disordered stretches follow at residues 548-596, 1085-1152, and 1198-1232; these read GENV…EESE, VSDA…SNNN, and SRSNLMSSSSSTTTTTLSSSNLLNPRGTTSSSSSK. Residues 550 to 559 are compositionally biased toward polar residues; the sequence is NVSSEYSSMA. Over residues 560–596 the composition is skewed to acidic residues; that stretch reads QDEDGTSNEAEELLDEEDLDEDEDETAEEKQEQEESE. A coiled-coil region spans residues 575-730; sequence EEDLDEDEDE…KKAKVELIKK (156 aa). Over residues 1116–1152 the composition is skewed to polar residues; it reads VSTSPASTSFANSTSQSPSFSRNTRFRSTVGGVSNNN. Positions 1200–1232 are enriched in low complexity; the sequence is SNLMSSSSSTTTTTLSSSNLLNPRGTTSSSSSK. WD repeat units lie at residues 1282-1319, 1389-1427, 1525-1566, and 1573-1605; these read GHARGVLSVDVNEKLMVTGSKDRTAKLWDIEACREIRT, FLETLITAADVDPTGQLLFTSFSAYVRVWNLREWKPLGR, AHQQ…RMKL, and AHQEGINDMCSTKSMLFTASGDSTVGFWKSNAV.

It belongs to the TRAFAC class myosin-kinesin ATPase superfamily. Kinesin family. Component of a complex at least composed of alpha tubulin and beta tubulin. Within the complex, interacts with the alpha tubulin and beta tubulin dimer.

Its subcellular location is the cytoplasm. The protein localises to the cytoskeleton. Functionally, microtubule-binding motor protein which has ATPase activity. In complex with alpha and beta tubulins, preferentially binds to the growing microtubule plus-end to stabilize it and detaches following ATP hydrolysis. Negatively regulates axonal length through inhibiting microtubule polymerization at its plus-end. In Caenorhabditis elegans, this protein is Kinesin-like protein klp-12.